A 199-amino-acid chain; its full sequence is MRVGVLAVQGAFIEHEKILQNLGVECLELRNGKDARQDVEGLILPGGESTTQGKLLRELDMFEPLREKIVAGLPVLATCAGLILLAEELANDSARYFATLPVRVKRNAYGRQLGSFYTEEQFGDLGKVPMTFIRAPYIESVGEGVEILAKVKGDIVGVRYKNQIGLSFHPELNGDRRIHQMFLDSISDGKSAPCKQKAV.

47–49 (GES) is a binding site for L-glutamine. Residue cysteine 79 is the Nucleophile of the active site. L-glutamine is bound by residues arginine 106 and 133 to 134 (IR). Residues histidine 169 and glutamate 171 each act as charge relay system in the active site.

It belongs to the glutaminase PdxT/SNO family. In the presence of PdxS, forms a dodecamer of heterodimers. Only shows activity in the heterodimer.

It catalyses the reaction aldehydo-D-ribose 5-phosphate + D-glyceraldehyde 3-phosphate + L-glutamine = pyridoxal 5'-phosphate + L-glutamate + phosphate + 3 H2O + H(+). The enzyme catalyses L-glutamine + H2O = L-glutamate + NH4(+). It participates in cofactor biosynthesis; pyridoxal 5'-phosphate biosynthesis. Functionally, catalyzes the hydrolysis of glutamine to glutamate and ammonia as part of the biosynthesis of pyridoxal 5'-phosphate. The resulting ammonia molecule is channeled to the active site of PdxS. This chain is Pyridoxal 5'-phosphate synthase subunit PdxT, found in Desulfitobacterium hafniense (strain Y51).